Consider the following 428-residue polypeptide: Enolase (428 aa).

(2R)-2-phosphoglycerate is bound at residue Gln163. Glu205 serves as the catalytic Proton donor. Mg(2+) contacts are provided by Asp242, Glu286, and Asp313. (2R)-2-phosphoglycerate-binding residues include Lys338, Arg367, Ser368, and Lys389. Lys338 acts as the Proton acceptor in catalysis.

This sequence belongs to the enolase family. Requires Mg(2+) as cofactor.

It is found in the cytoplasm. It localises to the secreted. The protein resides in the cell surface. The catalysed reaction is (2R)-2-phosphoglycerate = phosphoenolpyruvate + H2O. It functions in the pathway carbohydrate degradation; glycolysis; pyruvate from D-glyceraldehyde 3-phosphate: step 4/5. In terms of biological role, catalyzes the reversible conversion of 2-phosphoglycerate (2-PG) into phosphoenolpyruvate (PEP). It is essential for the degradation of carbohydrates via glycolysis. The protein is Enolase of Acidovorax sp. (strain JS42).